Reading from the N-terminus, the 539-residue chain is MSTNKFVVRITNALFKSSLASNSPPVYPKRIRHFEILPNEKWVIWGPGKGKFLDVLNNKYICEPPLSLRFGFLKESSNILPRIEQVAFKGVMPTAHLSARYEYFKDDYDQTCKQFIFDKASGSNAVSYKVETNNRQINMELYNALVENLNLSSLQDRWVMGLSNGQMRRARLARSILKEPDLLLIDDPFLGLDPAAIATISQFLAKYDSIEVSGGCPIVIGLRYQDTIPAWCTHICCVDEKNGILFEGPIEKLQSKMDETRSRALKELEQLKKASNSKEDISINDLICIHPMYGKKEHEIIKMPHLIELDGLSVSYKGEAVLENLHWKVQPGSKWHIRGDNGSGKSTLLSLLTAEHPQSWNSRVIDNGVPRRTGKTNYFDLNSKIGMSSPELHAIFLKNAGGRLNIRESVATGYHEASSNNYLPIWKRLDKNSQEIVNMYLKYFGLDKDADSVLFEQLSVSDQKLVLFVRSLIKMPQILILDEAFSGMEVEPMMRCHEFLEEWPGTVLVVAHVAEETPKCAHYLRLISPGEYEIGDMEN.

ABC transporter domains follow at residues 8–265 and 307–537; these read VRIT…SRAL and IELD…IGDM. An ATP-binding site is contributed by 339–346; it reads GDNGSGKS.

Belongs to the ABC transporter superfamily.

It localises to the mitochondrion. This is an uncharacterized protein from Saccharomyces cerevisiae (strain ATCC 204508 / S288c) (Baker's yeast).